Consider the following 539-residue polypeptide: Glucose-6-phosphate isomerase (539 aa).

Catalysis depends on glutamate 353, which acts as the Proton donor. Residues histidine 384 and lysine 505 contribute to the active site.

This sequence belongs to the GPI family.

It localises to the cytoplasm. The catalysed reaction is alpha-D-glucose 6-phosphate = beta-D-fructose 6-phosphate. It functions in the pathway carbohydrate biosynthesis; gluconeogenesis. Its pathway is carbohydrate degradation; glycolysis; D-glyceraldehyde 3-phosphate and glycerone phosphate from D-glucose: step 2/4. Catalyzes the reversible isomerization of glucose-6-phosphate to fructose-6-phosphate. The protein is Glucose-6-phosphate isomerase of Ralstonia nicotianae (strain ATCC BAA-1114 / GMI1000) (Ralstonia solanacearum).